A 294-amino-acid polypeptide reads, in one-letter code: tRNA pseudouridine synthase A (294 aa).

The active-site Nucleophile is the Asp64. A substrate-binding site is contributed by Tyr122.

This sequence belongs to the tRNA pseudouridine synthase TruA family. As to quaternary structure, homodimer.

It catalyses the reaction uridine(38/39/40) in tRNA = pseudouridine(38/39/40) in tRNA. Functionally, formation of pseudouridine at positions 38, 39 and 40 in the anticodon stem and loop of transfer RNAs. The sequence is that of tRNA pseudouridine synthase A from Synechococcus sp. (strain ATCC 27144 / PCC 6301 / SAUG 1402/1) (Anacystis nidulans).